A 201-amino-acid chain; its full sequence is Sorting nexin-10 (201 aa).

A required for interaction with ATP6V1D region spans residues 8–125; sequence EEFVSVWVRD…SLHLFLQSHL (118 aa). Residues 10–127 form the PX domain; that stretch reads FVSVWVRDPR…HLFLQSHLNS (118 aa). Residues arginine 53, lysine 79, and arginine 94 each contribute to the a 1,2-diacyl-sn-glycero-3-phospho-(1D-myo-inositol-3-phosphate) site. The interval 155 to 201 is disordered; the sequence is RFPEEEEEGKKDADVEYDSESSSSGLGHSSDDSSSHGCKTSPALQES.

This sequence belongs to the sorting nexin family. In terms of assembly, interacts with ATP6V1D; may play a role in ciliogenesis. In terms of tissue distribution, expressed in femur, calvariae and teeth.

It is found in the cytoplasm. It localises to the endosome membrane. The protein resides in the cytoskeleton. The protein localises to the microtubule organizing center. Its subcellular location is the centrosome. Its function is as follows. Probable phosphoinositide-binding protein involved in protein sorting and membrane trafficking in endosomes. Plays a role in cilium biogenesis through regulation of the transport and the localization of proteins to the cilium. Required for the localization to the cilium of V-ATPase subunit ATP6V1D and ATP6V0D1, and RAB8A. Involved in osteoclast differentiation and therefore bone resorption. The chain is Sorting nexin-10 (Snx10) from Mus musculus (Mouse).